Reading from the N-terminus, the 133-residue chain is Holo-[acyl-carrier-protein] synthase (133 aa).

D8 and E64 together coordinate Mg(2+).

This sequence belongs to the P-Pant transferase superfamily. AcpS family. Mg(2+) serves as cofactor.

The protein resides in the cytoplasm. It catalyses the reaction apo-[ACP] + CoA = holo-[ACP] + adenosine 3',5'-bisphosphate + H(+). In terms of biological role, transfers the 4'-phosphopantetheine moiety from coenzyme A to a Ser of acyl-carrier-protein. The polypeptide is Holo-[acyl-carrier-protein] synthase (Shewanella loihica (strain ATCC BAA-1088 / PV-4)).